The following is a 128-amino-acid chain: Large ribosomal subunit protein bL20c (128 aa).

It belongs to the bacterial ribosomal protein bL20 family.

It localises to the plastid. Its subcellular location is the chloroplast. Functionally, binds directly to 23S ribosomal RNA and is necessary for the in vitro assembly process of the 50S ribosomal subunit. It is not involved in the protein synthesizing functions of that subunit. The sequence is that of Large ribosomal subunit protein bL20c from Gossypium barbadense (Sea Island cotton).